The following is a 134-amino-acid chain: Probable glycine cleavage system H protein (134 aa).

The Lipoyl-binding domain occupies 29–110 (TVLVGITDYA…PYEAWIAKIK (82 aa)). Lys-70 carries the N6-lipoyllysine modification.

It belongs to the GcvH family. The glycine cleavage system is composed of four proteins: P, T, L and H. The cofactor is (R)-lipoate.

The glycine cleavage system catalyzes the degradation of glycine. The H protein shuttles the methylamine group of glycine from the P protein to the T protein. In Pyrococcus furiosus (strain ATCC 43587 / DSM 3638 / JCM 8422 / Vc1), this protein is Probable glycine cleavage system H protein.